A 364-amino-acid polypeptide reads, in one-letter code: Dihydroorotate dehydrogenase (quinone) (364 aa).

FMN is bound by residues 61–65 (AGFDK) and Thr85. A substrate-binding site is contributed by Lys65. 110-114 (NRMGF) contributes to the substrate binding site. FMN-binding residues include Asn139 and Asn170. Asn170 serves as a coordination point for substrate. Ser173 functions as the Nucleophile in the catalytic mechanism. Asn175 provides a ligand contact to substrate. FMN-binding residues include Lys214 and Ala242. 243-244 (NT) is a substrate binding site. Residues Gly266, Gly295, and 316 to 317 (YS) contribute to the FMN site.

Belongs to the dihydroorotate dehydrogenase family. Type 2 subfamily. As to quaternary structure, monomer. Requires FMN as cofactor.

The protein localises to the cell membrane. The enzyme catalyses (S)-dihydroorotate + a quinone = orotate + a quinol. It participates in pyrimidine metabolism; UMP biosynthesis via de novo pathway; orotate from (S)-dihydroorotate (quinone route): step 1/1. Its function is as follows. Catalyzes the conversion of dihydroorotate to orotate with quinone as electron acceptor. This chain is Dihydroorotate dehydrogenase (quinone), found in Rhodopseudomonas palustris (strain BisA53).